The sequence spans 130 residues: Small ribosomal subunit protein uS8 (130 aa).

Belongs to the universal ribosomal protein uS8 family. Part of the 30S ribosomal subunit. Contacts proteins S5 and S12.

Its function is as follows. One of the primary rRNA binding proteins, it binds directly to 16S rRNA central domain where it helps coordinate assembly of the platform of the 30S subunit. The polypeptide is Small ribosomal subunit protein uS8 (Buchnera aphidicola subsp. Baizongia pistaciae (strain Bp)).